Here is a 207-residue protein sequence, read N- to C-terminus: Cytochrome bo(3) ubiquinol oxidase subunit 3 (207 aa).

The Cytoplasmic portion of the chain corresponds to 1 to 26 (MSSQVMHGAAHGHDHGHDDHHHDSGQ). A helical transmembrane segment spans residues 27–47 (MTVLGFWLYLMTDCILFASLF). The Periplasmic portion of the chain corresponds to 48 to 70 (ATYAVLSGSFAGGPSGHDIFQLD). A helical membrane pass occupies residues 71–91 (FVAVETLFLLLSSITFGFAML). At 92 to 99 (KMFDGKKA) the chain is on the cytoplasmic side. A helical transmembrane segment spans residues 100-120 (GVLGWLAVTFLFGAGFIAMEI). Topologically, residues 121–141 (YEFHHLIAEGFGPQRSGFLSG) are periplasmic. Residues 142–162 (FFALVGTHGLHVTAGLIWMAI) form a helical membrane-spanning segment. Over 163-185 (MMYQINKHGITPTAKTRMSCLSL) the chain is Cytoplasmic. Residues 186–206 (FWHFLDVVWICVFTVVYLLGV) form a helical membrane-spanning segment. Residue Leu-207 is a topological domain, periplasmic.

It belongs to the cytochrome c oxidase subunit 3 family. As to quaternary structure, heterooctamer of two A chains, two B chains, two C chains and two D chains.

The protein resides in the cell inner membrane. Cytochrome bo(3) ubiquinol terminal oxidase is the component of the aerobic respiratory chain of E.coli that predominates when cells are grown at high aeration. Has proton pump activity across the membrane in addition to electron transfer, pumping 2 protons/electron. This Pseudomonas putida (Arthrobacter siderocapsulatus) protein is Cytochrome bo(3) ubiquinol oxidase subunit 3 (cyoC).